The primary structure comprises 567 residues: Type 2 DNA topoisomerase 6 subunit B (567 aa).

ATP contacts are provided by residues Asn46, Asp78, 99–100 (TK), 109–116 (GQQGIGIS), and Lys472.

It belongs to the TOP6B family. In terms of assembly, homodimer. Heterotetramer of two Top6A and two Top6B chains.

It carries out the reaction ATP-dependent breakage, passage and rejoining of double-stranded DNA.. Its function is as follows. Relaxes both positive and negative superturns and exhibits a strong decatenase activity. The polypeptide is Type 2 DNA topoisomerase 6 subunit B (Thermococcus kodakarensis (strain ATCC BAA-918 / JCM 12380 / KOD1) (Pyrococcus kodakaraensis (strain KOD1))).